The following is a 230-amino-acid chain: Orotidine 5'-phosphate decarboxylase (230 aa).

Substrate-binding positions include Asp-16, Lys-38, 65 to 74 (DLKLHDIGNT), Thr-119, Arg-180, Gln-189, Gly-209, and Arg-210. Lys-67 serves as the catalytic Proton donor.

The protein belongs to the OMP decarboxylase family. Type 1 subfamily. As to quaternary structure, homodimer.

It catalyses the reaction orotidine 5'-phosphate + H(+) = UMP + CO2. It functions in the pathway pyrimidine metabolism; UMP biosynthesis via de novo pathway; UMP from orotate: step 2/2. Functionally, catalyzes the decarboxylation of orotidine 5'-monophosphate (OMP) to uridine 5'-monophosphate (UMP). This chain is Orotidine 5'-phosphate decarboxylase, found in Methylobacterium radiotolerans (strain ATCC 27329 / DSM 1819 / JCM 2831 / NBRC 15690 / NCIMB 10815 / 0-1).